The primary structure comprises 278 residues: Ribosomal RNA small subunit methyltransferase A (278 aa).

S-adenosyl-L-methionine contacts are provided by asparagine 27, leucine 29, glycine 54, glutamate 75, aspartate 95, and asparagine 118.

It belongs to the class I-like SAM-binding methyltransferase superfamily. rRNA adenine N(6)-methyltransferase family. RsmA subfamily.

It is found in the cytoplasm. It carries out the reaction adenosine(1518)/adenosine(1519) in 16S rRNA + 4 S-adenosyl-L-methionine = N(6)-dimethyladenosine(1518)/N(6)-dimethyladenosine(1519) in 16S rRNA + 4 S-adenosyl-L-homocysteine + 4 H(+). In terms of biological role, specifically dimethylates two adjacent adenosines (A1518 and A1519) in the loop of a conserved hairpin near the 3'-end of 16S rRNA in the 30S particle. May play a critical role in biogenesis of 30S subunits. This is Ribosomal RNA small subunit methyltransferase A from Chlamydia caviae (strain ATCC VR-813 / DSM 19441 / 03DC25 / GPIC) (Chlamydophila caviae).